The primary structure comprises 430 residues: Flavin-dependent monooxygenase eupH (430 aa).

Residues Ala-11–Gly-14, Glu-33–Arg-34, Gln-43, Arg-107, Tyr-282, and Asp-306 each bind FAD.

It belongs to the aromatic-ring hydroxylase family. Requires FAD as cofactor.

The protein operates within secondary metabolite biosynthesis; terpenoid biosynthesis. In terms of biological role, flavin-dependent monooxygenase; part of the gene cluster that mediates the biosynthesis of eupenifeldin, a bistropolone meroterpenoid that acts as an antitumor agent. The first step of eupenifeldin biosynthesis is the biosynthesis of 3-methylorcinaldehyde performed by the non-reducing polyketide synthase eupA. Oxidative dearomatization of 3-methylorcinaldehyde likely catalyzed by the FAD-dependent monooxygenase eupB is followed by oxidative ring expansion by the 2-oxoglutarate-dependent dioxygenase eupC to provide the first tropolone metabolite, tropolone stipitaldehyde. In parallel, generation of sesquiterpene alpha-humulene from farnesylpyrophosphate (FPP) is catalyzed by the terpene cyclase eupE. The cytochrome P450 monooxygenase eupD then hydroxylates humulene to humulenol. The putative Diels-Alderase eupF probably catalyzes the formation of the tropolone-humulene skeleton by linking humulenol and the polyketide moiety. The short-chain dehydrogenase/reductase eupG and the flavin-dependent monooxygenase eupH are also essential for eupenifeldin biosynthesis and are likely the additional decorating enzymes of the tropolone-humulene skeleton to produce final eupenifeldin or derivatives. In Phoma sp, this protein is Flavin-dependent monooxygenase eupH.